We begin with the raw amino-acid sequence, 118 residues long: Small ribosomal subunit protein uS13 (118 aa).

The tract at residues 96–118 (PLRGQRTRTNARTRKGPRKAIKK) is disordered.

It belongs to the universal ribosomal protein uS13 family. Part of the 30S ribosomal subunit. Forms a loose heterodimer with protein S19. Forms two bridges to the 50S subunit in the 70S ribosome.

Located at the top of the head of the 30S subunit, it contacts several helices of the 16S rRNA. In the 70S ribosome it contacts the 23S rRNA (bridge B1a) and protein L5 of the 50S subunit (bridge B1b), connecting the 2 subunits; these bridges are implicated in subunit movement. Contacts the tRNAs in the A and P-sites. This chain is Small ribosomal subunit protein uS13, found in Stenotrophomonas maltophilia (strain K279a).